The chain runs to 1377 residues: DNA-directed RNA polymerase subunit beta'' (1377 aa).

Residues Cys224, Cys294, Cys301, and Cys304 each contribute to the Zn(2+) site.

This sequence belongs to the RNA polymerase beta' chain family. RpoC2 subfamily. In plastids the minimal PEP RNA polymerase catalytic core is composed of four subunits: alpha, beta, beta', and beta''. When a (nuclear-encoded) sigma factor is associated with the core the holoenzyme is formed, which can initiate transcription. The cofactor is Zn(2+).

The protein resides in the plastid. Its subcellular location is the chloroplast. It carries out the reaction RNA(n) + a ribonucleoside 5'-triphosphate = RNA(n+1) + diphosphate. DNA-dependent RNA polymerase catalyzes the transcription of DNA into RNA using the four ribonucleoside triphosphates as substrates. This Calycanthus floridus var. glaucus (Eastern sweetshrub) protein is DNA-directed RNA polymerase subunit beta''.